A 392-amino-acid chain; its full sequence is Transcription factor GATA-4 (392 aa).

The tract at residues 75–113 is disordered; that stretch reads SSAYNPGTSHPPVSPRFTFSSSPPITAPSSREVSYSSPL. Residues 91–113 are compositionally biased toward polar residues; sequence FTFSSSPPITAPSSREVSYSSPL. 2 consecutive GATA-type zinc fingers follow at residues 184–208 and 238–262; these read CVNC…CNAC and CANC…CNAC. 2 disordered regions span residues 279–339 and 359–392; these read KEGI…HSNS and MPSL…LVLA. Positions 284–293 are enriched in basic residues; the sequence is TRKRKPKNLS. A compositionally biased stretch (low complexity) spans 302–316; the sequence is SGSDSLTPSTSSTNS. The segment covering 364 to 380 has biased composition (polar residues); that stretch reads LSPQNHHSTFNPSPQAN.

In terms of tissue distribution, expressed at high levels in heart, small intestine, stomach, ovary, and liver. Found at much lower levels in lung, spleen, pancreas and skin.

It localises to the nucleus. Its function is as follows. Transcriptional activator that binds to the consensus sequence 5'-AGATAG-3'. Associated with cardiac specification and can regulate cardiac-specific transcription during embryogenesis. Activates the expression of cardiac MHC-alpha in vivo. This Xenopus laevis (African clawed frog) protein is Transcription factor GATA-4 (gata4).